Consider the following 245-residue polypeptide: Phycocyanobilin:ferredoxin oxidoreductase (245 aa).

The protein belongs to the HY2 family.

It catalyses the reaction (2R,3Z)-phycocyanobilin + 4 oxidized [2Fe-2S]-[ferredoxin] = biliverdin IXalpha + 4 reduced [2Fe-2S]-[ferredoxin] + 4 H(+). In terms of biological role, catalyzes the four-electron reduction of biliverdin IX-alpha (2-electron reduction at both the A and D rings); the reaction proceeds via an isolatable 2-electron intermediate, 181,182-dihydrobiliverdin. Upon overexpression in E.coli with PCB:ferredoxin oxidoreductase, CpeS and either CpcB or PecB permits synthesis of phycocyanin-coupled CpcB or PecB. In Nostoc sp. (strain PCC 7120 / SAG 25.82 / UTEX 2576), this protein is Phycocyanobilin:ferredoxin oxidoreductase (pcyA).